Reading from the N-terminus, the 85-residue chain is uncharacterized protein (85 aa).

A compositionally biased stretch (basic and acidic residues) spans 64–76 (DPPVRRSGGREQH). A disordered region spans residues 64–85 (DPPVRRSGGREQHLAQVWRATS).

This is an uncharacterized protein from Mycobacterium bovis (strain ATCC BAA-935 / AF2122/97).